We begin with the raw amino-acid sequence, 358 residues long: Trace amine-associated receptor 7c (358 aa).

Topologically, residues 1–47 (MATDDDSFPWDQDSILSRDLLSASSLQLCYENLNRSCVRSPYSPGSR) are extracellular. N-linked (GlcNAc...) asparagine glycosylation is present at asparagine 34. 2 cysteine pairs are disulfide-bonded: cysteine 37/cysteine 201 and cysteine 120/cysteine 205. A helical transmembrane segment spans residues 48–68 (LILYAVFGFGAVLAVCGNLLV). The Cytoplasmic portion of the chain corresponds to 69–83 (MTSILHFRQLHSPAN). A helical transmembrane segment spans residues 84-104 (FLVASLACADLLVGLTVMPFS). Over 105–125 (MVRSVEGCWYFGNTYCKFHSC) the chain is Extracellular. A helical membrane pass occupies residues 126 to 148 (FEGSFCYSSLFHLCFISLDRYIA). Topologically, residues 149–166 (VSDPLIYPTRFTASISGK) are cytoplasmic. Residues 167-187 (CITFSWLLSIIYSFSLLYTGA) form a helical membrane-spanning segment. Over 188-211 (NEAGLEDLVSALTCVGGCQVAVNQ) the chain is Extracellular. Residues 212–232 (SWVFINFLLFLVPALVMMTVY) form a helical membrane-spanning segment. Residues 233–274 (SKIFLIAKQQAQNIEKMSKQTARASESYKDRVAKRERKAAKT) lie on the Cytoplasmic side of the membrane. The chain crosses the membrane as a helical span at residues 275 to 295 (LGIAVAAFLLSWLPYFIDSII). Over 296 to 309 (DAFLGFITPTYMYE) the chain is Extracellular. The chain crosses the membrane as a helical span at residues 310 to 332 (ILVWIVYYNSAMNPLIYAFFYPW). Over 333–358 (FRKAIKLIVTGKILRENSSTINLFPE) the chain is Cytoplasmic.

Belongs to the G-protein coupled receptor 1 family.

It localises to the cell membrane. Its function is as follows. Olfactory receptor specific for N,N-dimethylalkylamines trace amines. Trace amine compounds are enriched in animal body fluids and act on trace amine-associated receptors (TAARs) to elicit both intraspecific and interspecific innate behaviors. Ligand-binding causes a conformation change that triggers signaling via G(s)-class of G alpha proteins (GNAL or GNAS). This Rattus norvegicus (Rat) protein is Trace amine-associated receptor 7c.